The sequence spans 747 residues: Superkiller protein 7 (747 aa).

The interval Lys-14 to Lys-51 is disordered. A compositionally biased stretch (polar residues) spans Ala-21–Ala-31. Residues Glu-35–Lys-51 are compositionally biased toward basic and acidic residues. Phosphoserine is present on residues Ser-88 and Ser-90. Residues Asn-89–Asp-117 are disordered. Positions Pro-265 to Thr-503 constitute a tr-type G domain. A G1 region spans residues Gly-274–Ser-281. Gly-274–Ser-281 contacts GTP. Residues Gly-331–Phe-335 are G2. Residues Asp-356–Gly-359 are G3. Residues Asp-356–Ser-360 and Asn-427–Asp-430 each bind GTP. The tract at residues Asn-427–Asp-430 is G4. The tract at residues Ser-467–Leu-469 is G5.

This sequence belongs to the TRAFAC class translation factor GTPase superfamily. Classic translation factor GTPase family. As to quaternary structure, interacts with the exosome and with the SKI complex composed of at least SKI2, SKI3 and SKI8. Interacts directly with SKI3 and SKI8.

It localises to the cytoplasm. In terms of biological role, represses the expression of non-poly(A) mRNAs like L-A or M viruses and is therefore involved in antiviral system. Mediates interactions via its N-terminus between the exosome and the SKI complex which operate in the 3'-to-5' mRNA-decay pathway. By interacting with NAM7, is also required for nonsense-mediated 3'-to-5' mRNA-decay (NMD). May recognize a stalled 80S ribosome at the 3'-end of a nonstop mRNA which leads to the recruitment of the exosome and SKI complexes to the mRNAs to be degraded. In Saccharomyces cerevisiae (strain ATCC 204508 / S288c) (Baker's yeast), this protein is Superkiller protein 7 (SKI7).